A 405-amino-acid polypeptide reads, in one-letter code: Tryptophan synthase beta chain (405 aa).

An N6-(pyridoxal phosphate)lysine modification is found at K98.

It belongs to the TrpB family. Tetramer of two alpha and two beta chains. It depends on pyridoxal 5'-phosphate as a cofactor.

The enzyme catalyses (1S,2R)-1-C-(indol-3-yl)glycerol 3-phosphate + L-serine = D-glyceraldehyde 3-phosphate + L-tryptophan + H2O. Its pathway is amino-acid biosynthesis; L-tryptophan biosynthesis; L-tryptophan from chorismate: step 5/5. Functionally, the beta subunit is responsible for the synthesis of L-tryptophan from indole and L-serine. This chain is Tryptophan synthase beta chain, found in Stenotrophomonas maltophilia (strain K279a).